A 398-amino-acid polypeptide reads, in one-letter code: Dual-specificity RNA methyltransferase RlmN (398 aa).

The active-site Proton acceptor is the Glu-121. In terms of domain architecture, Radical SAM core spans 127–370; that stretch reads ETDRGTLCVS…VRTPRGRDIL (244 aa). A disulfide bond links Cys-134 and Cys-373. Residues Cys-141, Cys-145, and Cys-148 each coordinate [4Fe-4S] cluster. Residues 199-200, Ser-231, 253-255, and Asn-330 each bind S-adenosyl-L-methionine; these read GE and SLH. Cys-373 functions as the S-methylcysteine intermediate in the catalytic mechanism.

It belongs to the radical SAM superfamily. RlmN family. It depends on [4Fe-4S] cluster as a cofactor.

It localises to the cytoplasm. The enzyme catalyses adenosine(2503) in 23S rRNA + 2 reduced [2Fe-2S]-[ferredoxin] + 2 S-adenosyl-L-methionine = 2-methyladenosine(2503) in 23S rRNA + 5'-deoxyadenosine + L-methionine + 2 oxidized [2Fe-2S]-[ferredoxin] + S-adenosyl-L-homocysteine. It carries out the reaction adenosine(37) in tRNA + 2 reduced [2Fe-2S]-[ferredoxin] + 2 S-adenosyl-L-methionine = 2-methyladenosine(37) in tRNA + 5'-deoxyadenosine + L-methionine + 2 oxidized [2Fe-2S]-[ferredoxin] + S-adenosyl-L-homocysteine. In terms of biological role, specifically methylates position 2 of adenine 2503 in 23S rRNA and position 2 of adenine 37 in tRNAs. m2A2503 modification seems to play a crucial role in the proofreading step occurring at the peptidyl transferase center and thus would serve to optimize ribosomal fidelity. The polypeptide is Dual-specificity RNA methyltransferase RlmN (Rhodopseudomonas palustris (strain BisB5)).